The primary structure comprises 544 residues: CTP synthase (544 aa).

An amidoligase domain region spans residues 1–265 (MARFIFITGG…DEAVLSAFGI (265 aa)). S13 provides a ligand contact to CTP. S13 contacts UTP. 14 to 19 (SLGKGL) contributes to the ATP binding site. Residue Y54 coordinates L-glutamine. D71 is a binding site for ATP. The Mg(2+) site is built by D71 and E139. CTP contacts are provided by residues 146–148 (DIE), 186–191 (KTKPTQ), and K222. UTP is bound by residues 186 to 191 (KTKPTQ) and K222. The region spanning 291 to 543 (TIGVVGKYVG…IAAALQQSRL (253 aa)) is the Glutamine amidotransferase type-1 domain. G355 lines the L-glutamine pocket. C382 acts as the Nucleophile; for glutamine hydrolysis in catalysis. Residues 383–386 (LGMQ), E406, and R471 contribute to the L-glutamine site. Residues H516 and E518 contribute to the active site.

Belongs to the CTP synthase family. As to quaternary structure, homotetramer.

It catalyses the reaction UTP + L-glutamine + ATP + H2O = CTP + L-glutamate + ADP + phosphate + 2 H(+). The catalysed reaction is L-glutamine + H2O = L-glutamate + NH4(+). It carries out the reaction UTP + NH4(+) + ATP = CTP + ADP + phosphate + 2 H(+). It participates in pyrimidine metabolism; CTP biosynthesis via de novo pathway; CTP from UDP: step 2/2. Its activity is regulated as follows. Allosterically activated by GTP, when glutamine is the substrate; GTP has no effect on the reaction when ammonia is the substrate. The allosteric effector GTP functions by stabilizing the protein conformation that binds the tetrahedral intermediate(s) formed during glutamine hydrolysis. Inhibited by the product CTP, via allosteric rather than competitive inhibition. Its function is as follows. Catalyzes the ATP-dependent amination of UTP to CTP with either L-glutamine or ammonia as the source of nitrogen. Regulates intracellular CTP levels through interactions with the four ribonucleotide triphosphates. The chain is CTP synthase from Rhizorhabdus wittichii (strain DSM 6014 / CCUG 31198 / JCM 15750 / NBRC 105917 / EY 4224 / RW1) (Sphingomonas wittichii).